The chain runs to 74 residues: UPF0435 protein GK0418 (74 aa).

It belongs to the UPF0435 family.

In Geobacillus kaustophilus (strain HTA426), this protein is UPF0435 protein GK0418.